The sequence spans 300 residues: Lysophosphatidic acid:oleoyl-CoA acyltransferase 1 (300 aa).

A helical transmembrane segment spans residues 33–53 (LLGILGVKTIIMLPLIMLYLL). Residues 101-106 (CTSPLD) carry the HXXXXD motif motif.

Belongs to the 1-acyl-sn-glycerol-3-phosphate acyltransferase family.

It is found in the lipid droplet. The protein localises to the endoplasmic reticulum membrane. It catalyses the reaction a 1-acyl-sn-glycero-3-phosphate + an acyl-CoA = a 1,2-diacyl-sn-glycero-3-phosphate + CoA. It carries out the reaction 1-hexadecanoyl-sn-glycero-3-phosphate + (9Z)-octadecenoyl-CoA = 1-hexadecanoyl-2-(9Z-octadecenoyl)-sn-glycero-3-phosphate + CoA. In terms of biological role, acyl-CoA-dependent lysophosphatidic acid acyltransferase with preference for oleoyl-CoA. Involved in triacylglyceride homeostasis and lipid droplet formation. Involved in vacuolar protein sorting. The polypeptide is Lysophosphatidic acid:oleoyl-CoA acyltransferase 1 (Saccharomyces cerevisiae (strain ATCC 204508 / S288c) (Baker's yeast)).